Reading from the N-terminus, the 448-residue chain is Phosphoglucosamine mutase (448 aa).

Catalysis depends on S100, which acts as the Phosphoserine intermediate. Residues S100, D240, D242, and D244 each coordinate Mg(2+). S100 carries the phosphoserine modification.

The protein belongs to the phosphohexose mutase family. Requires Mg(2+) as cofactor. Post-translationally, activated by phosphorylation.

The enzyme catalyses alpha-D-glucosamine 1-phosphate = D-glucosamine 6-phosphate. Functionally, catalyzes the conversion of glucosamine-6-phosphate to glucosamine-1-phosphate. This is Phosphoglucosamine mutase from Clostridioides difficile (strain 630) (Peptoclostridium difficile).